A 460-amino-acid polypeptide reads, in one-letter code: tRNA modification GTPase MnmE (460 aa).

(6S)-5-formyl-5,6,7,8-tetrahydrofolate is bound by residues R22, E87, and R126. The region spanning 222-381 (GLKTAIIGKP…LENTIYNLVF (160 aa)) is the TrmE-type G domain. N232 provides a ligand contact to K(+). Residues 232–237 (NVGKSS), 251–257 (TDIPGTT), and 276–279 (DTAG) contribute to the GTP site. A Mg(2+)-binding site is contributed by S236. 3 residues coordinate K(+): T251, I253, and T256. A Mg(2+)-binding site is contributed by T257. A (6S)-5-formyl-5,6,7,8-tetrahydrofolate-binding site is contributed by K460.

This sequence belongs to the TRAFAC class TrmE-Era-EngA-EngB-Septin-like GTPase superfamily. TrmE GTPase family. Homodimer. Heterotetramer of two MnmE and two MnmG subunits. Requires K(+) as cofactor.

It is found in the cytoplasm. Exhibits a very high intrinsic GTPase hydrolysis rate. Involved in the addition of a carboxymethylaminomethyl (cmnm) group at the wobble position (U34) of certain tRNAs, forming tRNA-cmnm(5)s(2)U34. The sequence is that of tRNA modification GTPase MnmE from Thermoanaerobacter pseudethanolicus (strain ATCC 33223 / 39E) (Clostridium thermohydrosulfuricum).